We begin with the raw amino-acid sequence, 527 residues long: EGF domain-specific O-linked N-acetylglucosamine transferase (527 aa).

The signal sequence occupies residues 1–19 (MLMLLVFGVLLHEVPLSGQ). The Required for optimal activity signature appears at 295–297 (DYD). The N-linked (GlcNAc...) asparagine glycan is linked to Asn354. The Prevents secretion from ER motif lies at 524-527 (HDEL).

It belongs to the glycosyltransferase 61 family. In terms of tissue distribution, widely expressed. Expressed in brain, heart, kidney, lung, skeletal muscles and thymus. Highest expression is observed in lung and the lowest in skeletal muscles.

It is found in the endoplasmic reticulum lumen. The enzyme catalyses L-seryl-[protein] + UDP-N-acetyl-alpha-D-glucosamine = 3-O-(N-acetyl-beta-D-glucosaminyl)-L-seryl-[protein] + UDP + H(+). It carries out the reaction L-threonyl-[protein] + UDP-N-acetyl-alpha-D-glucosamine = 3-O-(N-acetyl-beta-D-glucosaminyl)-L-threonyl-[protein] + UDP + H(+). Functionally, catalyzes the transfer of a single N-acetylglucosamine from UDP-GlcNAc to a serine or threonine residue in extracellular proteins resulting in their modification with a beta-linked N-acetylglucosamine (O-GlcNAc). Specifically glycosylates the Thr residue located between the fifth and sixth conserved cysteines of folded EGF-like domains. This Mus musculus (Mouse) protein is EGF domain-specific O-linked N-acetylglucosamine transferase (Eogt).